Reading from the N-terminus, the 430-residue chain is ATP-dependent RNA helicase RhlB (430 aa).

Residues 9–37 carry the Q motif motif; it reads QKFSDFALHPQVIEALESKGFHNCTPIQA. The region spanning 40 to 219 is the Helicase ATP-binding domain; sequence LPLALSGRDV…FEQMNNAEYV (180 aa). An ATP-binding site is contributed by 53–60; the sequence is AQTGTGKT. The DEAD box motif lies at 165 to 168; it reads DEAD. The 146-residue stretch at 245–390 folds into the Helicase C-terminal domain; it reads RLLQTLLEEE…VSKYNSDALM (146 aa). The tract at residues 392 to 430 is disordered; that stretch reads DLPAPKRLTRPPRSNNGPRRHNNAPRRSGAPRNNRKRAD.

Belongs to the DEAD box helicase family. RhlB subfamily. In terms of assembly, component of the RNA degradosome, which is a multiprotein complex involved in RNA processing and mRNA degradation.

Its subcellular location is the cytoplasm. It catalyses the reaction ATP + H2O = ADP + phosphate + H(+). In terms of biological role, DEAD-box RNA helicase involved in RNA degradation. Has RNA-dependent ATPase activity and unwinds double-stranded RNA. The sequence is that of ATP-dependent RNA helicase RhlB from Pectobacterium carotovorum subsp. carotovorum (strain PC1).